The chain runs to 398 residues: Acetate kinase (398 aa).

Residue asparagine 8 coordinates Mg(2+). Lysine 15 is a binding site for ATP. Arginine 89 is a binding site for substrate. Aspartate 146 functions as the Proton donor/acceptor in the catalytic mechanism. ATP contacts are provided by residues 206–210, 283–285, and 331–335; these read HIGNG, DMR, and GMGEN. Glutamate 383 contributes to the Mg(2+) binding site.

Belongs to the acetokinase family. As to quaternary structure, homodimer. Mg(2+) is required as a cofactor. It depends on Mn(2+) as a cofactor.

The protein localises to the cytoplasm. It catalyses the reaction acetate + ATP = acetyl phosphate + ADP. The protein operates within metabolic intermediate biosynthesis; acetyl-CoA biosynthesis; acetyl-CoA from acetate: step 1/2. In terms of biological role, catalyzes the formation of acetyl phosphate from acetate and ATP. Can also catalyze the reverse reaction. The protein is Acetate kinase of Streptococcus pyogenes serotype M49 (strain NZ131).